Consider the following 1129-residue polypeptide: Ubiquitin carboxyl-terminal hydrolase 15 (1129 aa).

A disordered region spans residues 1 to 26; the sequence is MVLSNVDAEEVNMDSSMELEESSQEP. Residues 7–23 are compositionally biased toward acidic residues; the sequence is DAEEVNMDSSMELEESS. Residues 51 to 204 enclose the MATH domain; that stretch reads HASYSWVVKN…NDEICISVTV (154 aa). Residues 230-545 form the USP domain; it reads VGLKNQGATC…NAYMLVYFRK (316 aa). Residue Cys-239 is the Nucleophile of the active site. The active-site Proton acceptor is the His-481.

Belongs to the peptidase C19 family.

It is found in the nucleus. The catalysed reaction is Thiol-dependent hydrolysis of ester, thioester, amide, peptide and isopeptide bonds formed by the C-terminal Gly of ubiquitin (a 76-residue protein attached to proteins as an intracellular targeting signal).. Functionally, hydrolase that deubiquitinates target proteins. Cleaves the UBL propeptide in sde2. Involved in regulating the steady-state levels of proteins including prp4. This Schizosaccharomyces pombe (strain 972 / ATCC 24843) (Fission yeast) protein is Ubiquitin carboxyl-terminal hydrolase 15.